Reading from the N-terminus, the 545-residue chain is MKPLKLKRLIMENNKSHATNLSLGGPFQGNCMPINQYFSKNQPNRGSSSSEKRSSLLPLWESKNAADGFSIVSHNVLLDGATTILNLNSFFECETGNYHTFCPISCVAWLYQKIEDSFFLVIGTKTCGYFLQNALGVMIFAEPRYAMAELEESDISAQLNDYKELKRLCLQIKQDRNPSVIVWIGTCTTEIIKMDLEGMAPRLETEIGIPIVVARANGLDYAFTQGEDTVLSAMALASLKKDVPFLVGNTGLTNNQLLLEKSTSSVNGTDGKELLKKSLVLFGSVPSTVTTQLTLELKKEGINVSGWLPSANYKDLPTFNKDTLVCGINPFLSRTATTLMRRSKCTLICAPFPIGPDGTRVWIEKICGAFGINPSLNPITGNTNLYDREQKIFNGLEDYLKLLRGKSVFFMGDNLLEISLARFLTRCGMIVYEIGIPYLDKRFQAAELALLEQTCKEMNVPMPRIVEKPDNYYQIRRIRELKPDLTITGMAHANPLEARGITTKWSVEFTFAQIHGFTNTREILELVTQPLRRNLMSNQSVNAIS.

Residues Cys-102, Cys-127, and Cys-187 each contribute to the [4Fe-4S] cluster site.

The protein belongs to the BchN/ChlN family. Protochlorophyllide reductase is composed of three subunits; ChlL, ChlN and ChlB. Forms a heterotetramer of two ChlB and two ChlN subunits. The cofactor is [4Fe-4S] cluster.

It is found in the plastid. The protein resides in the chloroplast. It catalyses the reaction chlorophyllide a + oxidized 2[4Fe-4S]-[ferredoxin] + 2 ADP + 2 phosphate = protochlorophyllide a + reduced 2[4Fe-4S]-[ferredoxin] + 2 ATP + 2 H2O. It functions in the pathway porphyrin-containing compound metabolism; chlorophyll biosynthesis (light-independent). In terms of biological role, component of the dark-operative protochlorophyllide reductase (DPOR) that uses Mg-ATP and reduced ferredoxin to reduce ring D of protochlorophyllide (Pchlide) to form chlorophyllide a (Chlide). This reaction is light-independent. The NB-protein (ChlN-ChlB) is the catalytic component of the complex. The chain is Light-independent protochlorophyllide reductase subunit N from Chlamydomonas reinhardtii (Chlamydomonas smithii).